The following is a 122-amino-acid chain: Secreted RxLR effector protein 80 (122 aa).

Positions 1–21 (MKKRALPIVIFVISLQQSSQS) are cleaved as a signal peptide. Residues 72 to 75 (RSLR) carry the RxLR motif.

It belongs to the RxLR effector family.

The protein localises to the secreted. The protein resides in the host endoplasmic reticulum membrane. Functionally, secreted effector that dos not suppress the host cell death induced by cell death-inducing proteins. The polypeptide is Secreted RxLR effector protein 80 (Plasmopara viticola (Downy mildew of grapevine)).